A 234-amino-acid polypeptide reads, in one-letter code: UPF0173 metal-dependent hydrolase Msp_0516 (234 aa).

The protein belongs to the UPF0173 family.

This Methanosphaera stadtmanae (strain ATCC 43021 / DSM 3091 / JCM 11832 / MCB-3) protein is UPF0173 metal-dependent hydrolase Msp_0516.